An 842-amino-acid polypeptide reads, in one-letter code: MNESKSVVDSGLMSGKIERTTLKLSDKLKLSSNIHQGTKFSLKKSVTTVEVRKSKKRKDINNIEQASVVLQNDNAYQDNESNNSLTIQEQISRMNALQNANICEKKEDIKEDTSDVNLQVTESTSVEKSESDDVTLEEESSKKVEEQVVEEAHDNTDTVSLNVVENVQEESQVDNQVESSNISDILQPKGIEEKKLKKYEKEHEEKKGNPKKGVSNNMYSKHVKLVIEEELEDNNKQVIQTHKSRKNRSTSSVKNKITRKVLIPKKITVQELASSMSERVKDVQHMLFQMGRRDIKPTDFLDSDHASVIVEAFNHTFKLVNDGKLEEDLYADGNDKELLPRAPVVTVMGHVDHGKTSLLDAIRKSNVADGEFKGITQHIGAYQIMLDGDKRITFIDTPGHEAFTAMRACGTNVTDIVVLVVAADDGIMPQTIESINHVKAANVAMIVAVNKIDKHDANIDKITNSLLNHGVVAESLGGDVIVVPVSAKERINLDQLKSSILLMAELLELKAVYDTRASGVVIESKVDRNCGVVATLIVQKGTLKAGDIIVVGHNSYGKVRNMFNSDGRSEKVAIPSMPVKVLGLNNVPNSGTNFIVVDSEKQARELISYRQELFNAELEANAKPKMDANSILACGVVDELNVILKCDVMGSVEAICYSISKITHEDIKLNVLYKGVGNVTKSDVLLAETSNSIILAFNVKTDASVKELAKQKCIEIKHYSVIYDIIDDVKKILSSMLKPLQQEVQVGTLSIRKVFSSGSIGSVLGCYVTNGIVRKGALVKLIRNNNVIHEGKIKVLRRFKDDVKEVAAGFECGILLDYSKEIYPESDIIHILEIVEEIRVIK.

The tract at residues 121-144 (TESTSVEKSESDDVTLEEESSKKV) is disordered. The 171-residue stretch at 340–510 (PRAPVVTVMG…LLMAELLELK (171 aa)) folds into the tr-type G domain. A G1 region spans residues 349 to 356 (GHVDHGKT). Residue 349–356 (GHVDHGKT) participates in GTP binding. Positions 374–378 (GITQH) are G2. Residues 396 to 399 (DTPG) form a G3 region. Residues 396-400 (DTPGH) and 450-453 (NKID) contribute to the GTP site. The tract at residues 450 to 453 (NKID) is G4. The tract at residues 486-488 (SAK) is G5.

This sequence belongs to the TRAFAC class translation factor GTPase superfamily. Classic translation factor GTPase family. IF-2 subfamily.

Its subcellular location is the cytoplasm. Its function is as follows. One of the essential components for the initiation of protein synthesis. Protects formylmethionyl-tRNA from spontaneous hydrolysis and promotes its binding to the 30S ribosomal subunits. Also involved in the hydrolysis of GTP during the formation of the 70S ribosomal complex. This chain is Translation initiation factor IF-2, found in Ehrlichia chaffeensis (strain ATCC CRL-10679 / Arkansas).